The chain runs to 405 residues: 8-amino-7-oxononanoate synthase 2 (405 aa).

Arg20 is a substrate binding site. Position 116 to 117 (116 to 117) interacts with pyridoxal 5'-phosphate; it reads GY. Residue His141 participates in substrate binding. Pyridoxal 5'-phosphate-binding residues include Ser187, His215, and Thr243. Lys246 is subject to N6-(pyridoxal phosphate)lysine. Thr369 contacts substrate.

It belongs to the class-II pyridoxal-phosphate-dependent aminotransferase family. BioF subfamily. As to quaternary structure, homodimer. Pyridoxal 5'-phosphate is required as a cofactor.

It carries out the reaction 6-carboxyhexanoyl-[ACP] + L-alanine + H(+) = (8S)-8-amino-7-oxononanoate + holo-[ACP] + CO2. The protein operates within cofactor biosynthesis; biotin biosynthesis. Its function is as follows. Catalyzes the decarboxylative condensation of pimeloyl-[acyl-carrier protein] and L-alanine to produce 8-amino-7-oxononanoate (AON), [acyl-carrier protein], and carbon dioxide. The polypeptide is 8-amino-7-oxononanoate synthase 2 (Polaromonas sp. (strain JS666 / ATCC BAA-500)).